A 403-amino-acid chain; its full sequence is Phosphoglycerate kinase (403 aa).

Residues 21 to 23 (DFN), Arg-36, 59 to 62 (HLGR), Arg-119, and Arg-154 contribute to the substrate site. Residues Lys-207, Gly-299, Glu-330, and 357–360 (GGDA) each bind ATP.

It belongs to the phosphoglycerate kinase family. As to quaternary structure, monomer.

The protein localises to the cytoplasm. It catalyses the reaction (2R)-3-phosphoglycerate + ATP = (2R)-3-phospho-glyceroyl phosphate + ADP. It participates in carbohydrate degradation; glycolysis; pyruvate from D-glyceraldehyde 3-phosphate: step 2/5. The sequence is that of Phosphoglycerate kinase from Chlamydia caviae (strain ATCC VR-813 / DSM 19441 / 03DC25 / GPIC) (Chlamydophila caviae).